We begin with the raw amino-acid sequence, 84 residues long: MAHKKGAGSTKNGRDSKPKMLGVKRFAGEKVHSGTIIVRQRGTRIHPGENVGLGRDYTIFATCEGVVKFEPTTNDRRKVSVVAD.

A disordered region spans residues 1–25; the sequence is MAHKKGAGSTKNGRDSKPKMLGVKR.

The protein belongs to the bacterial ribosomal protein bL27 family.

The sequence is that of Large ribosomal subunit protein bL27 from Dehalococcoides mccartyi (strain ATCC BAA-2266 / KCTC 15142 / 195) (Dehalococcoides ethenogenes (strain 195)).